The chain runs to 56 residues: Preprotein translocase subunit SecG (56 aa).

Over 1 to 29 the chain is Cytoplasmic; it reads MAKEKATLPPTGAGLMRFFDEDTRAVKVS. A helical membrane pass occupies residues 30 to 49; that stretch reads PKGVIALTLLLIAFEFILHM. Over 50-56 the chain is Extracellular; the sequence is FGSSIFG.

It belongs to the SEC61-beta family. As to quaternary structure, component of the protein translocase complex. Heterotrimer consisting of alpha (SecY), beta (SecG) and gamma (SecE) subunits. Can form oligomers of the heterotrimer.

Its subcellular location is the cell membrane. Involved in protein export. The function of the beta subunit is unknown, but it may be involved in stabilization of the trimeric complex. The polypeptide is Preprotein translocase subunit SecG (Thermococcus kodakarensis (strain ATCC BAA-918 / JCM 12380 / KOD1) (Pyrococcus kodakaraensis (strain KOD1))).